A 269-amino-acid chain; its full sequence is Putative pyruvate, phosphate dikinase regulatory protein (269 aa).

Residue 147 to 154 coordinates ADP; the sequence is GVSRTSKT.

It belongs to the pyruvate, phosphate/water dikinase regulatory protein family. PDRP subfamily.

It carries out the reaction N(tele)-phospho-L-histidyl/L-threonyl-[pyruvate, phosphate dikinase] + ADP = N(tele)-phospho-L-histidyl/O-phospho-L-threonyl-[pyruvate, phosphate dikinase] + AMP + H(+). It catalyses the reaction N(tele)-phospho-L-histidyl/O-phospho-L-threonyl-[pyruvate, phosphate dikinase] + phosphate + H(+) = N(tele)-phospho-L-histidyl/L-threonyl-[pyruvate, phosphate dikinase] + diphosphate. In terms of biological role, bifunctional serine/threonine kinase and phosphorylase involved in the regulation of the pyruvate, phosphate dikinase (PPDK) by catalyzing its phosphorylation/dephosphorylation. This chain is Putative pyruvate, phosphate dikinase regulatory protein, found in Geotalea daltonii (strain DSM 22248 / JCM 15807 / FRC-32) (Geobacter daltonii).